Here is a 469-residue protein sequence, read N- to C-terminus: Cytoplasmic tRNA 2-thiolation protein 2 (469 aa).

The protein belongs to the CTU2/NCS2 family.

Its subcellular location is the cytoplasm. It functions in the pathway tRNA modification; 5-methoxycarbonylmethyl-2-thiouridine-tRNA biosynthesis. Functionally, plays a central role in 2-thiolation of mcm(5)S(2)U at tRNA wobble positions of tRNA(Lys), tRNA(Glu) and tRNA(Gln). May act by forming a heterodimer with NCS6 that ligates sulfur from thiocarboxylated URM1 onto the uridine of tRNAs at wobble position. Prior mcm(5) tRNA modification by the elongator complex is required for 2-thiolation. May also be involved in protein urmylation. The sequence is that of Cytoplasmic tRNA 2-thiolation protein 2 from Candida glabrata (strain ATCC 2001 / BCRC 20586 / JCM 3761 / NBRC 0622 / NRRL Y-65 / CBS 138) (Yeast).